We begin with the raw amino-acid sequence, 77 residues long: Acyl carrier protein (77 aa).

One can recognise a Carrier domain in the interval 1–76; sequence MSLEDDVKAI…DVIKYIQEHQ (76 aa). The residue at position 36 (serine 36) is an O-(pantetheine 4'-phosphoryl)serine.

The protein belongs to the acyl carrier protein (ACP) family. In terms of processing, 4'-phosphopantetheine is transferred from CoA to a specific serine of apo-ACP by AcpS. This modification is essential for activity because fatty acids are bound in thioester linkage to the sulfhydryl of the prosthetic group.

The protein resides in the cytoplasm. Its pathway is lipid metabolism; fatty acid biosynthesis. Functionally, carrier of the growing fatty acid chain in fatty acid biosynthesis. This chain is Acyl carrier protein, found in Chlamydia trachomatis serovar L2 (strain ATCC VR-902B / DSM 19102 / 434/Bu).